A 543-amino-acid chain; its full sequence is Glutamyl-tRNA(Gln) amidotransferase subunit A, chloroplastic/mitochondrial (543 aa).

Catalysis depends on charge relay system residues K123 and S198. S222 (acyl-ester intermediate) is an active-site residue.

Belongs to the amidase family. GatA subfamily. Subunit of the heterotrimeric GatCAB amidotransferase (AdT) complex, composed of A, B and C subunits.

It is found in the mitochondrion. The protein resides in the plastid. It localises to the chloroplast stroma. It catalyses the reaction L-glutamyl-tRNA(Gln) + L-glutamine + ATP + H2O = L-glutaminyl-tRNA(Gln) + L-glutamate + ADP + phosphate + H(+). Functionally, allows the formation of correctly charged Gln-tRNA(Gln) through the transamidation of misacylated Glu-tRNA(Gln) in chloroplasts and mitochondria. The reaction takes place in the presence of glutamine and ATP through an activated gamma-phospho-Glu-tRNA(Gln). This is Glutamyl-tRNA(Gln) amidotransferase subunit A, chloroplastic/mitochondrial from Oryza sativa subsp. indica (Rice).